Consider the following 515-residue polypeptide: ATP-dependent RNA helicase DBP3 (515 aa).

Positions 1-67 (MAKRPLQTEA…SDSRYLPTPE (67 aa)) are disordered. The Q motif motif lies at 100–127 (TSFSFLPESSNDLYLPLEKFSSPTPIQA). Residues 130-306 (WPLAFAGRDL…ASFTKNPVTV (177 aa)) enclose the Helicase ATP-binding domain. 143-150 (AETGSGKT) is a binding site for ATP. The short motif at 252-255 (DEAD) is the DEAD box element. Positions 335–484 (RLLELLRRYQ…DVPESLLKFG (150 aa)) constitute a Helicase C-terminal domain.

It belongs to the DEAD box helicase family. DDX5/DBP2 subfamily.

The protein localises to the nucleus. The protein resides in the nucleolus. It catalyses the reaction ATP + H2O = ADP + phosphate + H(+). Its function is as follows. ATP-dependent RNA helicase required for 60S ribosomal subunit synthesis. Involved in efficient pre-rRNA processing, predominantly at site A3, which is necessary for the normal formation of 25S and 5.8S rRNAs. The protein is ATP-dependent RNA helicase DBP3 (DBP3) of Coccidioides immitis (strain RS) (Valley fever fungus).